The sequence spans 401 residues: Argininosuccinate synthase (401 aa).

ATP is bound by residues 7–15 (AYSGGLDTS) and Ala-34. The L-citrulline site is built by Tyr-85 and Ser-90. Gly-115 is an ATP binding site. Positions 117, 121, and 122 each coordinate L-aspartate. An L-citrulline-binding site is contributed by Asn-121. L-citrulline-binding residues include Arg-125, Ser-174, Ser-183, Glu-259, and Tyr-271.

It belongs to the argininosuccinate synthase family. Type 1 subfamily. As to quaternary structure, homotetramer.

The protein localises to the cytoplasm. It catalyses the reaction L-citrulline + L-aspartate + ATP = 2-(N(omega)-L-arginino)succinate + AMP + diphosphate + H(+). Its pathway is amino-acid biosynthesis; L-arginine biosynthesis; L-arginine from L-ornithine and carbamoyl phosphate: step 2/3. In Desulfitobacterium hafniense (strain DSM 10664 / DCB-2), this protein is Argininosuccinate synthase.